Reading from the N-terminus, the 635-residue chain is Threonine--tRNA ligase (635 aa).

The TGS domain maps to 1 to 61 (MVSIRLPDGS…DRDASLAIVT (61 aa)). The tract at residues 242–533 (DHRKLGKQLD…LIEHHAGAMP (292 aa)) is catalytic. Zn(2+)-binding residues include C333, H384, and H510.

Belongs to the class-II aminoacyl-tRNA synthetase family. As to quaternary structure, homodimer. The cofactor is Zn(2+).

It is found in the cytoplasm. The enzyme catalyses tRNA(Thr) + L-threonine + ATP = L-threonyl-tRNA(Thr) + AMP + diphosphate + H(+). Its function is as follows. Catalyzes the attachment of threonine to tRNA(Thr) in a two-step reaction: L-threonine is first activated by ATP to form Thr-AMP and then transferred to the acceptor end of tRNA(Thr). Also edits incorrectly charged L-seryl-tRNA(Thr). The polypeptide is Threonine--tRNA ligase (Burkholderia orbicola (strain MC0-3)).